Here is a 586-residue protein sequence, read N- to C-terminus: Acetylcholinesterase (586 aa).

Residues 1 to 21 (MNLLVTSSLGVLLHLVVLCQA) form the signal peptide. N-linked (GlcNAc...) asparagine glycosylation is present at Asn80. Cysteines 88 and 115 form a disulfide. Ser221 functions as the Acyl-ester intermediate in the catalytic mechanism. An intrachain disulfide couples Cys275 to Cys286. The active-site Charge relay system is Glu348. Cys423 and Cys542 are oxidised to a cystine. Asn437 is a glycosylation site (N-linked (GlcNAc...) asparagine). His461 functions as the Charge relay system in the catalytic mechanism. 2 N-linked (GlcNAc...) asparagine glycosylation sites follow: Asn478 and Asn554. Ser564 is lipidated: GPI-anchor amidated serine. Residues 565 to 586 (SGTSSSKGIIFYVLFSILYLIF) constitute a propeptide, removed in mature form.

Belongs to the type-B carboxylesterase/lipase family. Isoform H form is a homodimer; the asymmetric form is a disulfide-bonded oligomer composed of a collagenic subunit (Q) and a variable number of T catalytic subunits. Post-translationally, an interchain disulfide bond is present in what becomes position 593 of the T isoform. In terms of tissue distribution, found in the synapses and to a lower extent in extrajunctional areas of muscle and nerve, and on erythrocyte membranes.

Its subcellular location is the cell membrane. It localises to the synapse. It carries out the reaction acetylcholine + H2O = choline + acetate + H(+). Inhibited by substrate concentrations above 0.5 mM. Terminates signal transduction at the neuromuscular junction by rapid hydrolysis of the acetylcholine released into the synaptic cleft. May be involved in cell-cell interactions. The sequence is that of Acetylcholinesterase (ache) from Tetronarce californica (Pacific electric ray).